We begin with the raw amino-acid sequence, 85 residues long: Large ribosomal subunit protein bL27 (85 aa).

Positions 1 to 25 (MAHKKGVGSSRNGRDSNPKMLGVKR) are disordered.

The protein belongs to the bacterial ribosomal protein bL27 family.

This chain is Large ribosomal subunit protein bL27, found in Roseiflexus castenholzii (strain DSM 13941 / HLO8).